Reading from the N-terminus, the 309-residue chain is tRNA hydroxylation protein P2 (309 aa).

The protein belongs to the peptidase U32 family.

In terms of biological role, involved in prephenate-dependent formation of 5-hydroxyuridine (ho5U) modification at position 34 in tRNAs, the first step in 5-methoxyuridine (mo5U) biosynthesis. The polypeptide is tRNA hydroxylation protein P2 (Bacillus subtilis (strain 168)).